A 322-amino-acid polypeptide reads, in one-letter code: Malate dehydrogenase (322 aa).

Residues Gly10–Gly15 and Asp34 contribute to the NAD(+) site. The substrate site is built by Arg83 and Arg89. NAD(+)-binding positions include Asn96 and Ile119 to Asn121. Substrate is bound by residues Asn121 and Arg152. The active-site Proton acceptor is the His176.

It belongs to the LDH/MDH superfamily. MDH type 3 family.

The enzyme catalyses (S)-malate + NAD(+) = oxaloacetate + NADH + H(+). In terms of biological role, catalyzes the reversible oxidation of malate to oxaloacetate. The chain is Malate dehydrogenase from Bradyrhizobium sp. (strain BTAi1 / ATCC BAA-1182).